The following is a 603-amino-acid chain: Polypeptide N-acetylgalactosaminyltransferase 9 (603 aa).

Topologically, residues 1 to 6 are cytoplasmic; it reads MAVARK. Residues 7–29 form a helical; Signal-anchor for type II membrane protein membrane-spanning segment; it reads IRTLLTVNILVFVGIVLFSVYCR. The Lumenal portion of the chain corresponds to 30–603; the sequence is LQGRSQELVR…IRNWIKHARH (574 aa). Intrachain disulfides connect cysteine 141–cysteine 372 and cysteine 363–cysteine 442. The catalytic subdomain A stretch occupies residues 150–261; it reads LPQVSVVFIF…TGWAEPALSR (112 aa). Positions 191 and 222 each coordinate substrate. Mn(2+) contacts are provided by aspartate 245, histidine 247, and histidine 377. Residues 318-380 are catalytic subdomain B; it reads PIRTPAMIGC…PCSRVAHIER (63 aa). Arginine 380 and tyrosine 385 together coordinate substrate. N-linked (GlcNAc...) asparagine glycosylation is present at asparagine 460. The 137-residue stretch at 464–600 folds into the Ricin B-type lectin domain; the sequence is TYGEVRNSKA…KWMIRNWIKH (137 aa). 3 cysteine pairs are disulfide-bonded: cysteine 477–cysteine 493, cysteine 525–cysteine 540, and cysteine 567–cysteine 587.

Belongs to the glycosyltransferase 2 family. GalNAc-T subfamily. Mn(2+) serves as cofactor. Specifically expressed in brain. Not expressed in heart, placenta, lung, liver, skeletal muscle, kidney, pancreas, spleen, thymus, prostate, testis, ovary, small intestine, colon and leukocyte. In brain, it is expressed in cerebellum, frontal lobe, temporal lobe, putamen and spinal cord, weakly expressed in cerebral cortex. Not expressed in medulla and occipital pole.

Its subcellular location is the golgi apparatus membrane. It carries out the reaction L-seryl-[protein] + UDP-N-acetyl-alpha-D-galactosamine = a 3-O-[N-acetyl-alpha-D-galactosaminyl]-L-seryl-[protein] + UDP + H(+). The catalysed reaction is L-threonyl-[protein] + UDP-N-acetyl-alpha-D-galactosamine = a 3-O-[N-acetyl-alpha-D-galactosaminyl]-L-threonyl-[protein] + UDP + H(+). It functions in the pathway protein modification; protein glycosylation. Catalyzes the initial reaction in O-linked oligosaccharide biosynthesis, the transfer of an N-acetyl-D-galactosamine residue to a serine or threonine residue on the protein receptor. Does not glycosylate apomucin or SDC3. The sequence is that of Polypeptide N-acetylgalactosaminyltransferase 9 (GALNT9) from Homo sapiens (Human).